Reading from the N-terminus, the 202-residue chain is Small ribosomal subunit protein uS2 (202 aa).

It belongs to the universal ribosomal protein uS2 family.

The protein is Small ribosomal subunit protein uS2 of Methanocorpusculum labreanum (strain ATCC 43576 / DSM 4855 / Z).